A 152-amino-acid chain; its full sequence is MGKAVVVLSSSEGVSGTVYFAQEGDGPTTVTGNVSGLKPGLHGFHVHALGDTTNGCMSTGPHYNPNGKEHGAPEDDVRHAGDLGNITVGDDGTATFTIIDSQIPLSGPNSIVGRAVVVHAEPDDLGRGGHELSKTTGNAGGRVACGIIGLQG.

Residues histidine 45, histidine 47, and histidine 62 each contribute to the Cu cation site. A disulfide bond links cysteine 56 and cysteine 145. Zn(2+)-binding residues include histidine 62, histidine 70, histidine 79, and aspartate 82. A Cu cation-binding site is contributed by histidine 119.

This sequence belongs to the Cu-Zn superoxide dismutase family. Homodimer. Requires Cu cation as cofactor. Zn(2+) is required as a cofactor.

It localises to the cytoplasm. The catalysed reaction is 2 superoxide + 2 H(+) = H2O2 + O2. In terms of biological role, destroys radicals which are normally produced within the cells and which are toxic to biological systems. This is Superoxide dismutase [Cu-Zn] (SODCC) from Spinacia oleracea (Spinach).